We begin with the raw amino-acid sequence, 210 residues long: MTEPTIKLNYHKTRFLTSAPDIRHLPEDNGIEIAFAGRSNAGKSTALNALTNQKSLARTSKTPGRTQLINLFEVEPQCKLVDLPGYGYAAVPEQMKLQWQKALGEYLQKRDCLAGIVILMDIRHPLKDLDQQMIEWAVSAQLPVLLLLTKADKLSQVARNKTAKMVNEAILPFQGDIQVEIYSALNKIGVDKLSNKLDSWFAPIFQQEGK.

The region spanning 29-203 (NGIEIAFAGR…SNKLDSWFAP (175 aa)) is the EngB-type G domain. GTP is bound by residues 37–44 (GRSNAGKS), 64–68 (GRTQL), 82–85 (DLPG), 149–152 (TKAD), and 181–184 (IYSA). Positions 44 and 66 each coordinate Mg(2+).

The protein belongs to the TRAFAC class TrmE-Era-EngA-EngB-Septin-like GTPase superfamily. EngB GTPase family. The cofactor is Mg(2+).

Its function is as follows. Necessary for normal cell division and for the maintenance of normal septation. This Haemophilus ducreyi (strain 35000HP / ATCC 700724) protein is Probable GTP-binding protein EngB.